A 261-amino-acid chain; its full sequence is Small ribosomal subunit protein uS2 (261 aa).

A disordered region spans residues 222-261; the sequence is GKALREQDGEANEEQPISEEEKKEVLEEAMSEEDFEGDKE. Acidic residues-rich tracts occupy residues 230–239 and 248–261; these read GEANEEQPIS and EEAMSEEDFEGDKE.

The protein belongs to the universal ribosomal protein uS2 family.

This is Small ribosomal subunit protein uS2 from Campylobacter lari (strain RM2100 / D67 / ATCC BAA-1060).